The chain runs to 168 residues: 6-pyruvoyl tetrahydrobiopterin synthase (168 aa).

His19 contacts Zn(2+). The active-site Proton acceptor is the Cys38. 2 residues coordinate Zn(2+): His44 and His46. Active-site charge relay system residues include His85 and Glu130. Residue Ser159 is modified to Phosphoserine. The residue at position 161 (Thr161) is a Phosphothreonine. Residues Ser164, Ser165, and Ser167 each carry the phosphoserine modification.

This sequence belongs to the PTPS family. In terms of assembly, homohexamer formed of two homotrimers in a head to head fashion. It depends on Zn(2+) as a cofactor.

It carries out the reaction 7,8-dihydroneopterin 3'-triphosphate = 6-pyruvoyl-5,6,7,8-tetrahydropterin + triphosphate + H(+). Its pathway is cofactor biosynthesis; tetrahydrobiopterin biosynthesis; tetrahydrobiopterin from 7,8-dihydroneopterin triphosphate: step 1/3. Required for pigment and biopterin synthesis. In Drosophila melanogaster (Fruit fly), this protein is 6-pyruvoyl tetrahydrobiopterin synthase (pr).